Consider the following 457-residue polypeptide: Probable ECA polymerase (457 aa).

11 consecutive transmembrane segments (helical) span residues 3 to 23, 41 to 61, 65 to 85, 118 to 138, 154 to 174, 181 to 201, 206 to 226, 227 to 247, 340 to 360, 377 to 397, and 408 to 428; these read LLQF…ILTL, MLFL…VFGF, VVPA…YAIY, IMAL…GFLL, GVAL…VYFL, WLLF…IVGG, IIIA…ITLW, MLAL…LKRY, LVVM…GLII, YKAA…IVLA, and VVFF…LYWL.

It belongs to the WzyE family. In terms of assembly, probably part of a complex composed of WzxE, WzyE and WzzE.

It localises to the cell inner membrane. The protein operates within bacterial outer membrane biogenesis; enterobacterial common antigen biosynthesis. Functionally, probably involved in the polymerization of enterobacterial common antigen (ECA) trisaccharide repeat units. The sequence is that of Probable ECA polymerase from Erwinia tasmaniensis (strain DSM 17950 / CFBP 7177 / CIP 109463 / NCPPB 4357 / Et1/99).